The following is a 405-amino-acid chain: MSNYRRGVGSYSRMLGGGTNPFAAYTARKAKTKKRVLDKYEIIGYIAAGTYGRVYKARSKDPGDTNQYAIKKFKADKEGEMVHYAGISQSACREVALCAELDNRNITKLVETILEDTCIYMVFEYAEHDLLQIIHYHSHPERKPIPEYTLKSILWQLLNGVSYLHQNWVLHRDLKPANTMVTSDGVLKIGDLGLARLFSNPLQSLYSGDKVVVTIWYRAPELLLGARHYSPAVDLWAVGCIFAELLALRPIFKGEEAKMDNKTNVPFQRNQMQKIIEILGSPQEDDWPSLSKFPEYESLKQMKTFPPNLEAWYQSIGGTNQKGFQLLSRLLEYDPAKRLTANDALLHPYFTEAPKVSQNVFERQEYKYPPRRISCEDSDIKTMTYQGTKRGSQGGDNLHPRKKQK.

In terms of domain architecture, Protein kinase spans 40–350 (YEIIGYIAAG…ANDALLHPYF (311 aa)). Residues 46–54 (IAAGTYGRV) and Lys71 each bind ATP. Catalysis depends on Asp173, which acts as the Proton acceptor. The disordered stretch occupies residues 377 to 405 (DSDIKTMTYQGTKRGSQGGDNLHPRKKQK). A compositionally biased stretch (polar residues) spans 381 to 391 (KTMTYQGTKRG).

It belongs to the protein kinase superfamily. CMGC Ser/Thr protein kinase family. CDC2/CDKX subfamily. Component of the srb8-11 complex, a regulatory module of the Mediator complex. Requires Mg(2+) as cofactor.

Its subcellular location is the nucleus. The enzyme catalyses L-seryl-[protein] + ATP = O-phospho-L-seryl-[protein] + ADP + H(+). It carries out the reaction L-threonyl-[protein] + ATP = O-phospho-L-threonyl-[protein] + ADP + H(+). The catalysed reaction is [DNA-directed RNA polymerase] + ATP = phospho-[DNA-directed RNA polymerase] + ADP + H(+). In terms of biological role, component of the srb8-11 complex. The srb8-11 complex is a regulatory module of the Mediator complex which is itself dependent transcription. The srb8-11 complex may be involved in the transcriptional repression of a subset of genes regulated by Mediator. It may inhibit the association of the Mediator complex with RNA polymerase II to form the holoenzyme complex. The srb8-11 complex phosphorylates the C-terminal domain (CTD) of the largest subunit of RNA polymerase II. In Yarrowia lipolytica (strain CLIB 122 / E 150) (Yeast), this protein is Serine/threonine-protein kinase SSN3 (SSN3).